A 176-amino-acid polypeptide reads, in one-letter code: MSEPQRLFFAIDLPAEIREQIIHWRATHFPPEAGRPVAADNLHLTLAFLGEVSAEKEKALSLLAGRIRQPGFTLTLDDAGQWLRSRVVWLGMRQPPRGLIQLANMLRSQAARSGCFQSNRPFHPHITLLRDASEAVTIPPPGFNWSYAVTEFTLYASSFARGRTRYTPLKRWALTQ.

His-43 functions as the Proton donor in the catalytic mechanism. Short sequence motifs (HXTX) lie at residues 43 to 46 and 125 to 128; these read HLTL and HITL. His-125 (proton acceptor) is an active-site residue.

It belongs to the 2H phosphoesterase superfamily. ThpR family. As to quaternary structure, monomer.

The enzyme catalyses a 3'-end 2',3'-cyclophospho-ribonucleotide-RNA + H2O = a 3'-end 2'-phospho-ribonucleotide-RNA + H(+). In terms of biological role, hydrolyzes RNA 2',3'-cyclic phosphodiester to an RNA 2'-phosphomonoester. In vitro, can also ligate 5' and 3' half-tRNA molecules with 2',3'-cyclic phosphate and 5'-hydroxyl termini, respectively, to the product containing the 2'-5' phosphodiester linkage. This reaction does not require ATP and is reversible. The sequence is that of RNA 2',3'-cyclic phosphodiesterase from Escherichia coli (strain K12).